The following is a 137-amino-acid chain: ATP synthase epsilon chain (137 aa).

This sequence belongs to the ATPase epsilon chain family. In terms of assembly, F-type ATPases have 2 components, CF(1) - the catalytic core - and CF(0) - the membrane proton channel. CF(1) has five subunits: alpha(3), beta(3), gamma(1), delta(1), epsilon(1). CF(0) has three main subunits: a, b and c.

It localises to the cellular thylakoid membrane. Functionally, produces ATP from ADP in the presence of a proton gradient across the membrane. The sequence is that of ATP synthase epsilon chain from Trichodesmium erythraeum (strain IMS101).